We begin with the raw amino-acid sequence, 864 residues long: DNA mismatch repair protein MutS (864 aa).

621–628 (GPNMGGKS) contacts ATP. A disordered region spans residues 804–833 (ETGKPESPAPVASRSSKPSMQADMFAEPQP).

The protein belongs to the DNA mismatch repair MutS family.

In terms of biological role, this protein is involved in the repair of mismatches in DNA. It is possible that it carries out the mismatch recognition step. This protein has a weak ATPase activity. The protein is DNA mismatch repair protein MutS of Teredinibacter turnerae (strain ATCC 39867 / T7901).